A 78-amino-acid chain; its full sequence is U5-ctenitoxin-Pk1a (78 aa).

Intrachain disulfides connect C6-C23, C13-C29, C20-C52, C22-C40, C31-C38, C58-C73, and C69-C77.

Expressed by the venom gland.

It localises to the secreted. Its function is as follows. Lethal neurotoxin. Causes spastic paralysis and death in mice in 4-6 minutes after intracerebroventricular injection at dose levels of 1.5 ug per mouse. The chain is U5-ctenitoxin-Pk1a from Phoneutria keyserlingi (Brazilian wandering spider).